Consider the following 101-residue polypeptide: Urease subunit beta (101 aa).

The protein belongs to the urease beta subunit family. Heterotrimer of UreA (gamma), UreB (beta) and UreC (alpha) subunits. Three heterotrimers associate to form the active enzyme.

It localises to the cytoplasm. It carries out the reaction urea + 2 H2O + H(+) = hydrogencarbonate + 2 NH4(+). Its pathway is nitrogen metabolism; urea degradation; CO(2) and NH(3) from urea (urease route): step 1/1. In Jannaschia sp. (strain CCS1), this protein is Urease subunit beta.